A 386-amino-acid chain; its full sequence is Glyceraldehyde-3-phosphate dehydrogenase, chloroplastic (386 aa).

A chloroplast-targeting transit peptide spans 1–45; it reads MAYFKAVAYLAALASAAAFNPGSSFVPRLNAPATQPKAAKMTGPT. Residues 58–59 and Arg-125 contribute to the NADP(+) site; that span reads RI. D-glyceraldehyde 3-phosphate is bound by residues 197–199, Thr-228, 257–258, and Arg-280; these read SCT and TG. Cys-198 (nucleophile) is an active-site residue. Asn-362 is a binding site for NADP(+).

Belongs to the glyceraldehyde-3-phosphate dehydrogenase family. As to quaternary structure, homotetramer.

Its subcellular location is the plastid. It is found in the chloroplast. It carries out the reaction D-glyceraldehyde 3-phosphate + phosphate + NADP(+) = (2R)-3-phospho-glyceroyl phosphate + NADPH + H(+). The catalysed reaction is D-glyceraldehyde 3-phosphate + phosphate + NAD(+) = (2R)-3-phospho-glyceroyl phosphate + NADH + H(+). Its pathway is carbohydrate biosynthesis; Calvin cycle. The chain is Glyceraldehyde-3-phosphate dehydrogenase, chloroplastic (GAPC1) from Guillardia theta (Cryptophyte).